The sequence spans 827 residues: Probable beta-glucosidase H (827 aa).

D223 is an active-site residue. Residues 387-546 (RLLTNAVMHF…DSAEMVRSAV (160 aa)) form the PA14 domain. 4 N-linked (GlcNAc...) asparagine glycosylation sites follow: N471, N594, N600, and N625.

It belongs to the glycosyl hydrolase 3 family.

It is found in the secreted. It carries out the reaction Hydrolysis of terminal, non-reducing beta-D-glucosyl residues with release of beta-D-glucose.. It functions in the pathway glycan metabolism; cellulose degradation. In terms of biological role, beta-glucosidases are one of a number of cellulolytic enzymes involved in the degradation of cellulosic biomass. Catalyzes the last step releasing glucose from the inhibitory cellobiose. The protein is Probable beta-glucosidase H (bglH) of Aspergillus flavus (strain ATCC 200026 / FGSC A1120 / IAM 13836 / NRRL 3357 / JCM 12722 / SRRC 167).